Reading from the N-terminus, the 707-residue chain is Complement C1r-A subcomponent (707 aa).

Residues 1 to 16 (MWLFALLVTLFYGVEG) form the signal peptide. Positions 17 to 140 (SIYLPQKLYG…KGFLAYYQAV (124 aa)) constitute a CUB 1 domain. Residues Glu-65, Asp-73, and Asp-118 each contribute to the Ca(2+) site. Cys-70 and Cys-88 are oxidised to a cystine. N-linked (GlcNAc...) asparagine glycosylation is present at Asn-124. Ca(2+) contacts are provided by Asp-141, Leu-142, and Glu-144. The 49-residue stretch at 141–189 (DLDECASQPNSVEEGLQPRCQHLCHNYVGGYFCSCHPGYELQKDGQSCQ) folds into the EGF-like; calcium-binding domain. Disulfide bonds link Cys-145-Cys-164, Cys-160-Cys-173, Cys-175-Cys-188, and Cys-192-Cys-219. The Ca(2+) site is built by Asn-166, Tyr-167, and Gly-170. Asn-166 carries the post-translational modification (3R)-3-hydroxyasparagine. A CUB 2 domain is found at 192 to 304 (CSSELYTEPS…RGWKLHYTTE (113 aa)). Ser-205 carries the phosphoserine; by CK2 modification. N-linked (GlcNAc...) asparagine glycosylation occurs at Asn-220. Ca(2+) contacts are provided by Asp-242, Asp-252, Asp-289, and Asp-293. An intrachain disulfide couples Cys-249 to Cys-267. Sushi domains are found at residues 306–372 (IKCP…RCKI) and 373–448 (KNCG…RCLP). Cystine bridges form between Cys-308-Cys-357, Cys-337-Cys-370, Cys-375-Cys-428, Cys-405-Cys-446, and Cys-450-Cys-579. The region spanning 463-704 (IIRGQPARPG…YVDWIKKEMG (242 aa)) is the Peptidase S1 domain. Catalysis depends on charge relay system residues His-501 and Asp-559. The N-linked (GlcNAc...) asparagine glycan is linked to Asn-583. Disulfide bonds link Cys-622/Cys-641 and Cys-652/Cys-682. Residue Ser-656 is the Charge relay system of the active site.

This sequence belongs to the peptidase S1 family. Core component of the complement C1 complex, a calcium-dependent complex composed of 1 molecule of the C1Q subcomplex, 2 molecules of C1R and 2 molecules of C1S. The C1Q subcomplex is composed 18 subunits: 3 chains of C1QA, C1QB, and C1QC trimerize to form 6 collagen-like triple helices connected to six globular ligand-recognition modules. Within the C1 complex, C1R is a dimer of identical chains, each of which is activated by cleavage into two chains, heavy and light, connected by disulfide bonds. In terms of processing, cleaved and activated by autocatalytic processing to generate Complement C1r subcomponent heavy and light chains that are connected by disulfide bonds. Post-translationally, the iron and 2-oxoglutarate dependent 3-hydroxylation of aspartate and asparagine is (R) stereospecific within EGF domains.

It is found in the secreted. It localises to the cell surface. It catalyses the reaction Selective cleavage of Lys(or Arg)-|-Ile bond in complement subcomponent C1s to form the active form of C1s (EC 3.4.21.42).. Activated by the C1Q subcomplex of the C1 complex following C1Q binding to immunoglobulins (IgG or IgM) complexed with antigens to form antigen-antibody complexes on the surface of pathogens. Immunoglobulin-binding promotes autoactivation of C1R, which results in the cleavage of the Arg-Ile bond in the catalytic domain. Serine protease component of the complement C1 complex, a multiprotein complex that initiates the classical pathway of the complement system, a cascade of proteins that leads to phagocytosis and breakdown of pathogens and signaling that strengthens the adaptive immune system. C1R catalyzes the first enzymatic step in the classical complement pathway: it is activated by the C1Q subcomplex of the C1 complex, which associates with IgG or IgM immunoglobulins complexed with antigens to form antigen-antibody complexes on the surface of pathogens. Immunoglobulin-binding promotes the autocatalytic cleavage and activation of C1R. Activated C1R then cleaves and activates C1S, the second protease of the classical complement pathway. It is unclear if C1R activates C1S within single, strained C1 complexes or between neighboring C1 complexes on surfaces. The chain is Complement C1r-A subcomponent (C1ra) from Mus musculus (Mouse).